The primary structure comprises 90 residues: MNNVFKAISDPTRRKILDLLKGGDMTAGDIAEHFNISKPSISHHLNILKQAEVISDHRKGQFIYYSLNTTVLQDSINWMLNFINKGDNDL.

The HTH arsR-type domain occupies 1-87 (MNNVFKAISD…WMLNFINKGD (87 aa)). A DNA-binding region (H-T-H motif) is located at residues 39–62 (PSISHHLNILKQAEVISDHRKGQF).

Its subcellular location is the cytoplasm. Functionally, represses the transcription of the sdpIR operon and of several other operons that probably contribute to delaying commitment to sporulation. In Bacillus subtilis (strain 168), this protein is Transcriptional repressor SdpR (sdpR).